We begin with the raw amino-acid sequence, 183 residues long: Inner membrane protein p54 (183 aa).

A helical transmembrane segment spans residues 32–52 (YTILIAIVVLVIIIIVLIYLF). The interval 81–157 (EVTPQPGTSK…PYTTVTTQNT (77 aa)) is disordered. Residues 111 to 122 (RPATNKPVTDNP) are compositionally biased toward polar residues. Positions 130 to 143 (ATGGPAAAPAAASA) are enriched in low complexity. Residues 149–161 (YTTVTTQNTASQT) are interaction with host DYNLL1.

This sequence belongs to the asfivirus envelope protein p54 family. In terms of assembly, interacts with the host light chain cytoplasmic dynein DYNLL1; this interaction is critical for intracellular microtubule-dependent virus transport toward viral factories.

It localises to the virion membrane. Its subcellular location is the host cytoplasm. It is found in the host cytoskeleton. The protein resides in the host endoplasmic reticulum membrane. Functionally, inner envelope protein involved, through its interaction with host dynein, in the intracellular microtubule-dependent transport of viral capsid toward viral factories. Seems to induce caspase-3 activation and apoptosis. Plays a role in virion morphogenesis by recruiting and transforming the host ER membranes into the precursors of the viral envelope. Involved in virus attachment to the host cell. The polypeptide is Inner membrane protein p54 (Ornithodoros (relapsing fever ticks)).